Reading from the N-terminus, the 382-residue chain is Ferredoxin--NADP reductase, root isozyme 2, chloroplastic (382 aa).

Residues 1-64 (MSHSAVSQAG…DGKRYPSTTI (64 aa)) constitute a chloroplast transit peptide. The 129-residue stretch at 97-225 (KESYTAKIVS…TGPSGKVMLL (129 aa)) folds into the FAD-binding FR-type domain. Cys200 and Cys205 are joined by a disulfide. Ser201 carries the post-translational modification Phosphoserine. Thr233 is subject to Phosphothreonine. Position 235–253 (235–253 (IMIATGTGVAPYRGYLRRM)) interacts with NADP(+).

The protein belongs to the ferredoxin--NADP reductase type 1 family. FAD is required as a cofactor. In terms of tissue distribution, expressed in shoots and roots. More abundant in roots than RFNR1.

The protein resides in the plastid. It is found in the chloroplast. The enzyme catalyses 2 reduced [2Fe-2S]-[ferredoxin] + NADP(+) + H(+) = 2 oxidized [2Fe-2S]-[ferredoxin] + NADPH. Maintains the supply of reduced ferredoxin under non-photosynthetic conditions. This is Ferredoxin--NADP reductase, root isozyme 2, chloroplastic (RFNR2) from Arabidopsis thaliana (Mouse-ear cress).